A 505-amino-acid polypeptide reads, in one-letter code: MAADNSKQFWKRSAKLPGSIQPVYGAQHPPLDPRLTKNFIKERSKVGTVPLKNKKASSFHEFARNTSDAWDIGDDEEEDFSSPSFQTLNSKVALATAAQVLENHSKLRVKPERSQSTTSDVPANYKVIKSSSDAQLSRNSSDTCLRNPLHKQQSLPLRPIIPLVARISDQNASGAPPMTVREKTRLEKFRQLLSSHNTDLDELRKCSWPGVPREVRPVTWRLLSGYLPANTERRKLTLQRKREEYFGFIEQYYDSRNEEHHQDTYRQIHIDIPRTNPLIPLFQQPLVQEIFERILFIWAIRHPASGYVQGINDLVTPFFVVFLSEYVEEDVENFDVTNLSQDMLRSIEADSFWCMSKLLDGIQDNYTFAQPGIQKKVKALEELVSRIDEQVHNHFRRYEVEYLQFAFRWMNNLLMRELPLRCTIRLWDTYQSEPEGFSHFHLYVCAAFLIKWRKEILDEEDFQGLLMLLQNLPTIHWGNEEIGLLLAEAYRLKYMFADAPNHYRR.

Position 2 is an N-acetylalanine (Ala2). Residues Ser58 and Ser116 each carry the phosphoserine modification. The interval 105–146 is disordered; that stretch reads SKLRVKPERSQSTTSDVPANYKVIKSSSDAQLSRNSSDTCLR. A compositionally biased stretch (polar residues) spans 129–146; the sequence is KSSSDAQLSRNSSDTCLR. The residue at position 154 (Ser154) is a Phosphoserine. The 225-residue stretch at 210–434 folds into the Rab-GAP TBC domain; that stretch reads GVPREVRPVT…RLWDTYQSEP (225 aa).

As to quaternary structure, interacts with ACBD3 and ARFGEF1. Interacts with YWHAB, YWHAE, YWHAG, YWHAH, YWHAQ and YWHAZ.

Functionally, may act as a GTPase-activating protein for Rab family protein(s). The chain is TBC1 domain family member 22B (TBC1D22B) from Macaca fascicularis (Crab-eating macaque).